A 252-amino-acid polypeptide reads, in one-letter code: Cysteine-rich repeat secretory protein 38 (252 aa).

The signal sequence occupies residues M1–S27. 2 Gnk2-homologous domains span residues F34–F136 and F142–F248.

The protein belongs to the cysteine-rich repeat secretory protein family.

It localises to the secreted. This chain is Cysteine-rich repeat secretory protein 38 (CRRSP38), found in Arabidopsis thaliana (Mouse-ear cress).